A 200-amino-acid polypeptide reads, in one-letter code: Small ribosomal subunit protein uS4 (200 aa).

Positions 22–41 (TGKELQKRPYAPGQHGPNQR) are disordered. In terms of domain architecture, S4 RNA-binding spans 92–152 (SRLDNLVYRM…EKSRNLQVIK (61 aa)).

The protein belongs to the universal ribosomal protein uS4 family. In terms of assembly, part of the 30S ribosomal subunit. Contacts protein S5. The interaction surface between S4 and S5 is involved in control of translational fidelity.

In terms of biological role, one of the primary rRNA binding proteins, it binds directly to 16S rRNA where it nucleates assembly of the body of the 30S subunit. With S5 and S12 plays an important role in translational accuracy. The sequence is that of Small ribosomal subunit protein uS4 from Halalkalibacterium halodurans (strain ATCC BAA-125 / DSM 18197 / FERM 7344 / JCM 9153 / C-125) (Bacillus halodurans).